Here is a 592-residue protein sequence, read N- to C-terminus: Vacuolin-B (592 aa).

Positions 1–30 are enriched in polar residues; it reads MIESSSFMKKTSSENSIGSRSNIHEASTFS. The segment at 1–35 is disordered; it reads MIESSSFMKKTSSENSIGSRSNIHEASTFSSEHEN. Residues 480-534 adopt a coiled-coil conformation; it reads KTTEARLKAETDNIALEQKGKAIIAEAQAKLESAQKQAQALLITAEAQKKVQEMQ. Residues 491-555 are oligomerization domain; the sequence is DNIALEQKGK…EIELAKIKSE (65 aa).

The protein belongs to the vacuolin family. In terms of assembly, homotrimer.

Its subcellular location is the endosome membrane. The protein resides in the lysosome membrane. Its function is as follows. Negative regulator of late steps of the endocytic pathway. The protein is Vacuolin-B (vacB) of Dictyostelium discoideum (Social amoeba).